The following is a 1163-amino-acid chain: Guanylate cyclase 32E (1163 aa).

The signal sequence occupies residues 1–25 (MPGPCASAAAFSCILVLLLLGCQRS). The Extracellular portion of the chain corresponds to 29–469 (AAGATVSSMR…LCPRKKLDWR (441 aa)). N-linked (GlcNAc...) asparagine glycans are attached at residues Asn-147, Asn-206, Asn-368, and Asn-390. Residues 470–490 (YLVSGPLCALVVVVAIALLIK) traverse the membrane as a helical segment. At 491–1163 (HYRYEQTLAG…RSAPSITFRL (673 aa)) the chain is on the cytoplasmic side. One can recognise a Protein kinase domain in the interval 507–800 (MKDVTVINLG…IRLVRMHLKE (294 aa)). The 131-residue stretch at 873-1003 (TILFSDIVGF…DTVNTASRME (131 aa)) folds into the Guanylate cyclase domain.

It belongs to the adenylyl cyclase class-4/guanylyl cyclase family.

It is found in the membrane. It catalyses the reaction GTP = 3',5'-cyclic GMP + diphosphate. This is Guanylate cyclase 32E (Gyc32E) from Drosophila melanogaster (Fruit fly).